Consider the following 63-residue polypeptide: Actiflagelin (63 aa).

Disulfide bonds link C3–C24, C6–C11, C17–C39, C43–C55, and C56–C61. P63 carries the proline amide modification.

Contains 5 disulfide bonds. Expressed by the venom gland.

The protein localises to the secreted. Functionally, unknown. In vitro, this toxin activates sperm motility when tested on OF1 male mice. In Walterinnesia aegyptia (Desert black snake), this protein is Actiflagelin.